A 42-amino-acid polypeptide reads, in one-letter code: Alpha-lactalbumin I (42 aa).

One can recognise a C-type lysozyme domain in the interval 1 to 42 (IDYRKCQASQILKEHGMDKVIPLPELVCTMFHISGLSPQAEV).

The protein belongs to the glycosyl hydrolase 22 family. As to quaternary structure, lactose synthase (LS) is a heterodimer of a catalytic component, beta1,4-galactosyltransferase (beta4Gal-T1) and a regulatory component, alpha-lactalbumin (LA). Mammary gland specific. Secreted in milk.

Its subcellular location is the secreted. In terms of biological role, regulatory subunit of lactose synthase, changes the substrate specificity of galactosyltransferase in the mammary gland making glucose a good acceptor substrate for this enzyme. This enables LS to synthesize lactose, the major carbohydrate component of milk. In other tissues, galactosyltransferase transfers galactose onto the N-acetylglucosamine of the oligosaccharide chains in glycoproteins. The polypeptide is Alpha-lactalbumin I (LALBA) (Macropus giganteus (Eastern gray kangaroo)).